Consider the following 217-residue polypeptide: UPF0502 protein PFLU_2135 (217 aa).

This sequence belongs to the UPF0502 family.

This chain is UPF0502 protein PFLU_2135, found in Pseudomonas fluorescens (strain SBW25).